The sequence spans 290 residues: MVGEMDKPLVSVVMATYNEPEKYLKESIESIXNQTXKDFXFIIVLDNPNNKKAEEIIKEYQQKDKRIIFIKNERNLGRGASRNKAVNIARGKYIAILDADDIALPKRLEKQFKYMENNRDIDLLFSWVYFIDENGNILKEFKPEKYKFKEIKKYFFKEHLTVHPSMMVKSKILKKLKYDEKLIRSQDYDFWIRCIANDYKFDIIEEFLLKYRIPNRDNYLSRIKKQKLYSYYTLKTHWKNKKHFCNNVYFWKVFFYSLVVYLFIVLTPTFILKILIDIKDKKTEISTKGH.

Belongs to the glycosyltransferase 2 family.

This is an uncharacterized protein from Methanocaldococcus jannaschii (strain ATCC 43067 / DSM 2661 / JAL-1 / JCM 10045 / NBRC 100440) (Methanococcus jannaschii).